A 492-amino-acid chain; its full sequence is 56 kDa U1 small nuclear ribonucleoprotein component (492 aa).

Residues 1 to 15 (MRPRRRGLAYHHTKP) show a composition bias toward basic residues. 2 disordered regions span residues 1–35 (MRPR…QRRK) and 300–371 (DQFP…NKPG). Positions 18–30 (QLSQGHYPTTSND) are enriched in polar residues. Residues 310-321 (SNSPSSNSISSS) are compositionally biased toward low complexity. Residues 329–353 (TSYQTQPQRHAVNKPSNVLNSSNRH) are compositionally biased toward polar residues.

As to quaternary structure, component of the 18S U1 snRNP particle, a subcomplex of the spliceosome. Interacts with the nuclear cap-binding complex CBC1-CBC2 (yCBC). Directly contacts intronic sequences of substrate pre-RNA.

The protein localises to the nucleus. Functionally, component of the U1 snRNP particle, which recognizes and binds the 5'-splice site of pre-mRNA. Together with other non-snRNP factors, U1 snRNP forms the spliceosomal commitment complex, that targets pre-mRNA to the splicing pathway. This Saccharomyces cerevisiae (strain ATCC 204508 / S288c) (Baker's yeast) protein is 56 kDa U1 small nuclear ribonucleoprotein component (SNU56).